Reading from the N-terminus, the 639-residue chain is MEPDDGHNSLNQDNGIPIVLDPNLINLRSRAASATVTTNGTTADSSEDSGSQQSVSSAPIQQNSEEHSLVSNPYETYGRMPLQKLIPLILQMRNASSFSELTEEDLLRDIEREEKGILTTGLDVEGDIEMGDADEESDLKPQEITDDDSNARLKPNNDSAIPQEEFNQMKREVLEHINLALNESSLSLEFISLLLSSVRPSVGVGSMSPFLKRSVPTASLNADKVELPPKNKTETLTLAVINRGWKLRSLEDSKALLKENYAKLQKSLEVEHAHWAMISQHISSTDVVFKMRDRQTGKRSLAVKYGYEDSGSLYKQDRGVAVLRHNMDLNKLELVPISNSKEEVHITANSVERFMRVHIYTKIEEEDDYILSGESSIDDQSLLQPCHDDISRQIARLKFFIFERELMYQLKKEAVSLMPYGVNFENENKVVLESPGERIEFEMVPLDDSALLSTHEPRRVNDKRANIILILLRMLLVVIHKKQLRRGLKPATSKHKYRADGDLLLLRPVLGRIRHRNYLQVVKRVVTECVLNIVPGSSIELLPQRSEPDTLHAREANIASLNKQIGLFDKILRMPRSELRTSLGAKGVIDLTLKSSNYCNAIIQVIYADSAGKTVFDTVFTELKELEEFLHFIVSEYVL.

Residues 32–43 (ASATVTTNGTTA) show a composition bias toward polar residues. Disordered regions lie at residues 32 to 68 (ASAT…EEHS) and 130 to 159 (MGDA…NNDS). Low complexity predominate over residues 48 to 57 (DSGSQQSVSS). Residues 58 to 68 (APIQQNSEEHS) show a composition bias toward polar residues. Residues 245–271 (WKLRSLEDSKALLKENYAKLQKSLEVE) are a coiled coil.

Belongs to the Mediator complex subunit 17 family. In terms of assembly, component of the Mediator complex.

The protein resides in the nucleus. Its function is as follows. Component of the Mediator complex, a coactivator involved in the regulated transcription of nearly all RNA polymerase II-dependent genes. Mediator functions as a bridge to convey information from gene-specific regulatory proteins to the basal RNA polymerase II transcription machinery. Mediator is recruited to promoters by direct interactions with regulatory proteins and serves as a scaffold for the assembly of a functional preinitiation complex with RNA polymerase II and the general transcription factors. The chain is Mediator of RNA polymerase II transcription subunit 17 (SRB4) from Eremothecium gossypii (strain ATCC 10895 / CBS 109.51 / FGSC 9923 / NRRL Y-1056) (Yeast).